We begin with the raw amino-acid sequence, 376 residues long: Chaperone protein DnaJ (376 aa).

The region spanning 5–70 is the J domain; sequence DYYEILGVSK…QKRAAYDQYG (66 aa). The CR-type zinc-finger motif lies at 131–209; sequence GVTKEIRIPT…CHGHGRVERS (79 aa). Zn(2+) contacts are provided by C144, C147, C161, C164, C183, C186, C197, and C200. CXXCXGXG motif repeat units follow at residues 144–151, 161–168, 183–190, and 197–204; these read CDVCHGSG, CPTCHGSG, CPHCQGRG, and CNKCHGHG.

It belongs to the DnaJ family. In terms of assembly, homodimer. Zn(2+) serves as cofactor.

It is found in the cytoplasm. Participates actively in the response to hyperosmotic and heat shock by preventing the aggregation of stress-denatured proteins and by disaggregating proteins, also in an autonomous, DnaK-independent fashion. Unfolded proteins bind initially to DnaJ; upon interaction with the DnaJ-bound protein, DnaK hydrolyzes its bound ATP, resulting in the formation of a stable complex. GrpE releases ADP from DnaK; ATP binding to DnaK triggers the release of the substrate protein, thus completing the reaction cycle. Several rounds of ATP-dependent interactions between DnaJ, DnaK and GrpE are required for fully efficient folding. Also involved, together with DnaK and GrpE, in the DNA replication of plasmids through activation of initiation proteins. The protein is Chaperone protein DnaJ of Escherichia fergusonii (strain ATCC 35469 / DSM 13698 / CCUG 18766 / IAM 14443 / JCM 21226 / LMG 7866 / NBRC 102419 / NCTC 12128 / CDC 0568-73).